Reading from the N-terminus, the 229-residue chain is Glutamine amidotransferase-like class 1 domain-containing protein 1 (229 aa).

Residues 1–34 (MKKQGAPVSGGGTERLTKPSCLMVGSAVAEGVSA) form the signal peptide. N-linked (GlcNAc...) asparagine glycosylation is found at Asn154 and Asn212.

It belongs to the peptidase C56 family. Homotetramer. Component of the FERRY complex.

It localises to the secreted. The protein resides in the early endosome. Component of the FERRY complex (Five-subunit Endosomal Rab5 and RNA/ribosome intermediary). The FERRY complex directly interacts with mRNAs and RAB5A, and functions as a RAB5A effector involved in the localization and the distribution of specific mRNAs most likely by mediating their endosomal transport. The complex recruits mRNAs and ribosomes to early endosomes through direct mRNA-interaction. The polypeptide is Glutamine amidotransferase-like class 1 domain-containing protein 1 (Xenopus laevis (African clawed frog)).